The sequence spans 301 residues: Bifunctional protein FolD (301 aa).

Residues 164–166 (GRS), Ser-191, and Ile-232 contribute to the NADP(+) site.

It belongs to the tetrahydrofolate dehydrogenase/cyclohydrolase family. In terms of assembly, homodimer.

The enzyme catalyses (6R)-5,10-methylene-5,6,7,8-tetrahydrofolate + NADP(+) = (6R)-5,10-methenyltetrahydrofolate + NADPH. It carries out the reaction (6R)-5,10-methenyltetrahydrofolate + H2O = (6R)-10-formyltetrahydrofolate + H(+). It functions in the pathway one-carbon metabolism; tetrahydrofolate interconversion. Functionally, catalyzes the oxidation of 5,10-methylenetetrahydrofolate to 5,10-methenyltetrahydrofolate and then the hydrolysis of 5,10-methenyltetrahydrofolate to 10-formyltetrahydrofolate. This Borrelia garinii subsp. bavariensis (strain ATCC BAA-2496 / DSM 23469 / PBi) (Borreliella bavariensis) protein is Bifunctional protein FolD.